A 106-amino-acid chain; its full sequence is UPF0145 protein BDI_2732 (106 aa).

It belongs to the UPF0145 family.

In Parabacteroides distasonis (strain ATCC 8503 / DSM 20701 / CIP 104284 / JCM 5825 / NCTC 11152), this protein is UPF0145 protein BDI_2732.